Here is a 251-residue protein sequence, read N- to C-terminus: Orcokinin peptides type A (251 aa).

An N-terminal signal peptide occupies residues 1 to 20; that stretch reads MTAQMFTIALLLSLSAIAAA. 3 propeptides span residues 21–46, 225–231, and 249–251; these read GTIK…GAPV, DYDVFPD, and NVE.

It belongs to the orcokinin family.

The protein resides in the secreted. Its function is as follows. Myotropic peptides that enhance both the frequency and amplitude of spontaneous hindgut contractions. In Procambarus clarkii (Red swamp crayfish), this protein is Orcokinin peptides type A.